Here is a 69-residue protein sequence, read N- to C-terminus: Protein SlyX homolog (69 aa).

Belongs to the SlyX family.

The chain is Protein SlyX homolog from Pseudomonas aeruginosa (strain LESB58).